A 348-amino-acid polypeptide reads, in one-letter code: Mannonate dehydratase (348 aa).

It belongs to the mannonate dehydratase family. Fe(2+) serves as cofactor. It depends on Mn(2+) as a cofactor.

It carries out the reaction D-mannonate = 2-dehydro-3-deoxy-D-gluconate + H2O. The protein operates within carbohydrate metabolism; pentose and glucuronate interconversion. Functionally, catalyzes the dehydration of D-mannonate. The polypeptide is Mannonate dehydratase (Streptococcus agalactiae serotype III (strain NEM316)).